Here is a 463-residue protein sequence, read N- to C-terminus: Quinolone resistance protein NorB (463 aa).

14 consecutive transmembrane segments (helical) span residues 17-37 (IGIVLSVITFWLFAQSLVNVV), 53-73 (IAVSITALFSGMFVVGAGGLA), 86-106 (IILNILGSLLIIISNIPLLLI), 107-127 (IGRLIQGLSAACIMPATLSII), 142-162 (YWSIGSWGGSGVCSFFGGAVA), 165-185 (LGWRWIFILSIIISLIALFLI), 201-221 (FDIKGLVLLVIMLLSLNILIT), 230-250 (SLLFITLLAIAIGSFSLFIVL), 273-293 (TASNFLLNGVAGTLIVANTFV), 299-319 (YSSLQAGSLSITYLVMVLIMI), 334-354 (PMLIGTGVLIVGECLISLTFL), 357-377 (IFYVICCIIGYLFFGLGLGIY), 403-423 (MASALGGAFGVALSGAVYAIV), and 435-455 (IALWLNAAMGILSFVIILLLV).

The protein belongs to the major facilitator superfamily. TCR/Tet family.

The protein resides in the cell membrane. In terms of biological role, multidrug efflux pump that acts independently of NorA and is one of the factors that confers resistance against diverse quinolones and chemical compounds. This chain is Quinolone resistance protein NorB (norB), found in Staphylococcus aureus (strain COL).